The following is a 1180-amino-acid chain: DNA-directed RNA polymerase subunit beta (1180 aa).

Over residues 1154–1164 (EMKELDDEDEQ) the composition is skewed to acidic residues. Positions 1154-1180 (EMKELDDEDEQASDKLNLNIDSTESNV) are disordered. Residues 1167–1180 (DKLNLNIDSTESNV) are compositionally biased toward polar residues.

It belongs to the RNA polymerase beta chain family. In terms of assembly, the RNAP catalytic core consists of 2 alpha, 1 beta, 1 beta' and 1 omega subunit. When a sigma factor is associated with the core the holoenzyme is formed, which can initiate transcription.

It carries out the reaction RNA(n) + a ribonucleoside 5'-triphosphate = RNA(n+1) + diphosphate. Its function is as follows. DNA-dependent RNA polymerase catalyzes the transcription of DNA into RNA using the four ribonucleoside triphosphates as substrates. This Halalkalibacterium halodurans (strain ATCC BAA-125 / DSM 18197 / FERM 7344 / JCM 9153 / C-125) (Bacillus halodurans) protein is DNA-directed RNA polymerase subunit beta.